The chain runs to 321 residues: uncharacterized protein (321 aa).

The region spanning 1-56 (MANIKDIAEKAGVSVTTVSRVINNHPYVSEDKRKRVFEAMESLEYTRNIHAVHLSK) is the HTH lacI-type domain. A DNA-binding region (H-T-H motif) is located at residues 4–23 (IKDIAEKAGVSVTTVSRVIN).

This is an uncharacterized protein from Bacillus subtilis (strain 168).